The sequence spans 429 residues: Adenylosuccinate synthetase (429 aa).

GTP is bound by residues 12–18 (GDEGKGK) and 40–42 (GHT). The Proton acceptor role is filled by aspartate 13. Positions 13 and 40 each coordinate Mg(2+). Residues 13-16 (DEGK), 38-41 (NAGH), threonine 128, arginine 142, glutamine 223, threonine 238, and arginine 302 contribute to the IMP site. Residue histidine 41 is the Proton donor of the active site. Residue 298 to 304 (TTTGRPR) participates in substrate binding. GTP contacts are provided by residues arginine 304, 330–332 (CID), and 412–414 (SVG).

Belongs to the adenylosuccinate synthetase family. Homodimer. It depends on Mg(2+) as a cofactor.

It is found in the cytoplasm. It carries out the reaction IMP + L-aspartate + GTP = N(6)-(1,2-dicarboxyethyl)-AMP + GDP + phosphate + 2 H(+). The protein operates within purine metabolism; AMP biosynthesis via de novo pathway; AMP from IMP: step 1/2. Its function is as follows. Plays an important role in the de novo pathway of purine nucleotide biosynthesis. Catalyzes the first committed step in the biosynthesis of AMP from IMP. In Streptococcus mutans serotype c (strain ATCC 700610 / UA159), this protein is Adenylosuccinate synthetase.